We begin with the raw amino-acid sequence, 131 residues long: Snaclec bitiscetin subunit alpha (131 aa).

3 cysteine pairs are disulfide-bonded: C4–C15, C32–C125, and C100–C117. The 116-residue stretch at 11 to 126 (YKGHCYKVFK…CGEKNPFICK (116 aa)) folds into the C-type lectin domain.

The protein belongs to the snaclec family. Heterodimer of subunits alpha and beta; disulfide-linked. In terms of tissue distribution, expressed by the venom gland.

It localises to the secreted. In terms of biological role, snaclec that binds to von Willebrand factor (VWF) and induces its interaction with GPIbalpha (GP1BA) (via the vWF A1 domain), resulting in platelet aggregation. In Bitis arietans (African puff adder), this protein is Snaclec bitiscetin subunit alpha.